The chain runs to 172 residues: Epididymal secretory protein 4 (172 aa).

The first 21 residues, 1 to 21 (MIAVLLLVFGMTPDYIFPVSA), serve as a signal peptide directing secretion. An intrachain disulfide couples C82 to C167.

The protein belongs to the calycin superfamily. Lipocalin family. Secreted by the epididymal epithelial cells.

The protein resides in the secreted. The protein localises to the extracellular space. Its function is as follows. Could transport small hydrophobic molecules into the epididymal fluid during the sperm maturation. Binds to the head region of spermatozoa and plays a key role in sperm maturation. The sequence is that of Epididymal secretory protein 4 from Zootoca vivipara (Common lizard).